The sequence spans 392 residues: G2/mitotic-specific cyclin-B (392 aa).

This sequence belongs to the cyclin family. Cyclin AB subfamily.

In terms of biological role, essential for the control of the cell cycle at the G2/M (mitosis) transition. Interacts with the CDC2 protein kinase to form MPF. G2/M cyclins accumulate steadily during G2 and are abruptly destroyed at mitosis. In Hydra viridissima (Green hydra), this protein is G2/mitotic-specific cyclin-B.